The primary structure comprises 829 residues: RNA-directed RNA polymerase (829 aa).

Positions 1–39 are disordered; that stretch reads MKEPVDCRLSTPAGFSGTVPPPGRTKAARPGTIPVRRSR.

In terms of assembly, forms a ribonucleoprotein complex with the 20S RNA, where a single polymerase molecule binds to a single viral RNA genome. Since the viral RNA is not encapsidated, ribonucleoprotein complex formation appears to be the strategy to survive in the host as persistent virus.

It localises to the host cytoplasm. The catalysed reaction is RNA(n) + a ribonucleoside 5'-triphosphate = RNA(n+1) + diphosphate. RNA-directed RNA polymerase that replicates the viral (+) and (-) genome. The sequence is that of RNA-directed RNA polymerase from Saccharomyces cerevisiae (Baker's yeast).